Consider the following 287-residue polypeptide: 3-methyl-2-oxobutanoate hydroxymethyltransferase (287 aa).

Asp-67 and Asp-106 together coordinate Mg(2+). Residues 67-68, Asp-106, and Lys-136 contribute to the 3-methyl-2-oxobutanoate site; that span reads DS. Glu-138 contacts Mg(2+). Glu-204 acts as the Proton acceptor in catalysis.

Belongs to the PanB family. In terms of assembly, homodecamer; pentamer of dimers. Mg(2+) serves as cofactor.

It localises to the cytoplasm. The enzyme catalyses 3-methyl-2-oxobutanoate + (6R)-5,10-methylene-5,6,7,8-tetrahydrofolate + H2O = 2-dehydropantoate + (6S)-5,6,7,8-tetrahydrofolate. Its pathway is cofactor biosynthesis; (R)-pantothenate biosynthesis; (R)-pantoate from 3-methyl-2-oxobutanoate: step 1/2. Its function is as follows. Catalyzes the reversible reaction in which hydroxymethyl group from 5,10-methylenetetrahydrofolate is transferred onto alpha-ketoisovalerate to form ketopantoate. This is 3-methyl-2-oxobutanoate hydroxymethyltransferase from Streptomyces avermitilis (strain ATCC 31267 / DSM 46492 / JCM 5070 / NBRC 14893 / NCIMB 12804 / NRRL 8165 / MA-4680).